Consider the following 1120-residue polypeptide: Elongation factor-like GTPase 1 (1120 aa).

In terms of domain architecture, tr-type G spans 17-272 (ANIRNICVLA…LMKTLWGDYY (256 aa)). GTP-binding positions include 26–33 (AHVDHGKT), 92–96 (DSPGH), and 146–149 (NKID). The disordered stretch occupies residues 430 to 496 (PRPLTQEEIA…VESMTPKPVL (67 aa)). 2 stretches are compositionally biased toward basic and acidic residues: residues 438–452 (IAQRRERARQRHAEK) and 475–484 (PKGEEPRGDE). Lysine 528 bears the N6-acetyllysine mark. Residues 907-930 (ASDLAKEGQEENETCSGGNENQEL) form a disordered region. Residues 920–930 (TCSGGNENQEL) are compositionally biased toward polar residues.

The protein belongs to the TRAFAC class translation factor GTPase superfamily. Classic translation factor GTPase family. Associates with the 60S ribosomal subunit. Found in a complex consisting of the 60S ribosomal subunit, SBDS and EFL1. Interacts with SBDS and binds to GTP and GDP; the interaction with SBDS decreases EFL1 affinity for GDP and facilitates GDP release. As to expression, expressed at low levels in brain. Expression is highly increased in glioma tissues.

It carries out the reaction GTP + H2O = GDP + phosphate + H(+). With respect to regulation, GTPase activity is stimulated in the presence of 60S ribosome subunits. Functionally, GTPase involved in the biogenesis of the 60S ribosomal subunit and translational activation of ribosomes. Together with SBDS, triggers the GTP-dependent release of EIF6 from 60S pre-ribosomes in the cytoplasm, thereby activating ribosomes for translation competence by allowing 80S ribosome assembly and facilitating EIF6 recycling to the nucleus, where it is required for 60S rRNA processing and nuclear export. The chain is Elongation factor-like GTPase 1 from Homo sapiens (Human).